Here is a 205-residue protein sequence, read N- to C-terminus: Cytochrome c biogenesis ATP-binding export protein CcmA 1 (205 aa).

The ABC transporter domain occupies 2-205; the sequence is LEARDLYCER…LALTGGEAGL (204 aa). 34–41 contributes to the ATP binding site; sequence GGNGAGKT.

This sequence belongs to the ABC transporter superfamily. CcmA exporter (TC 3.A.1.107) family. As to quaternary structure, the complex is composed of two ATP-binding proteins (CcmA) and two transmembrane proteins (CcmB).

The protein resides in the cell inner membrane. It catalyses the reaction heme b(in) + ATP + H2O = heme b(out) + ADP + phosphate + H(+). In terms of biological role, part of the ABC transporter complex CcmAB involved in the biogenesis of c-type cytochromes; once thought to export heme, this seems not to be the case, but its exact role is uncertain. Responsible for energy coupling to the transport system. The protein is Cytochrome c biogenesis ATP-binding export protein CcmA 1 of Salmonella paratyphi A (strain ATCC 9150 / SARB42).